The sequence spans 374 residues: tRNA N6-adenosine threonylcarbamoyltransferase (374 aa).

2 residues coordinate Fe cation: histidine 117 and histidine 121. Substrate contacts are provided by residues 140 to 144 (LVSGG), aspartate 174, glycine 187, aspartate 191, and asparagine 283. Aspartate 311 contacts Fe cation. Over residues 337 to 352 (ADSSLPVTEPHVPGQG) the composition is skewed to low complexity. The disordered stretch occupies residues 337 to 374 (ADSSLPVTEPHVPGQGHPHGHPHGHDHVHEVSKENLYS). Residues 359–374 (HGHDHVHEVSKENLYS) show a composition bias toward basic and acidic residues.

It belongs to the KAE1 / TsaD family. Fe(2+) is required as a cofactor.

The protein resides in the cytoplasm. The catalysed reaction is L-threonylcarbamoyladenylate + adenosine(37) in tRNA = N(6)-L-threonylcarbamoyladenosine(37) in tRNA + AMP + H(+). Its function is as follows. Required for the formation of a threonylcarbamoyl group on adenosine at position 37 (t(6)A37) in tRNAs that read codons beginning with adenine. Is involved in the transfer of the threonylcarbamoyl moiety of threonylcarbamoyl-AMP (TC-AMP) to the N6 group of A37, together with TsaE and TsaB. TsaD likely plays a direct catalytic role in this reaction. This chain is tRNA N6-adenosine threonylcarbamoyltransferase, found in Streptomyces coelicolor (strain ATCC BAA-471 / A3(2) / M145).